The chain runs to 461 residues: Protein KlcB (461 aa).

2 disordered regions span residues 84 to 107 (PEATTPAARRRTKARKSKPQTEDK) and 349 to 379 (RAKAQEPAGQRREPVTPAKPEPEPAKDEDAP). The span at 91 to 101 (ARRRTKARKSK) shows a compositional bias: basic residues. Over residues 357–377 (GQRREPVTPAKPEPEPAKDED) the composition is skewed to basic and acidic residues.

The sequence is that of Protein KlcB (klcB) from Escherichia coli.